The following is an 829-amino-acid chain: DNA ligase (829 aa).

Positions 1–23 are disordered; the sequence is MPAQTSRARPVEEMTAAQAREAH. Residues 47–51, 96–97, and glutamate 130 contribute to the NAD(+) site; these read DAEYD and SL. Catalysis depends on lysine 132, which acts as the N6-AMP-lysine intermediate. The NAD(+) site is built by arginine 153, glutamate 190, lysine 306, and lysine 330. Zn(2+) is bound by residues cysteine 453, cysteine 456, cysteine 477, and cysteine 483. The BRCT domain maps to 750–829; that stretch reads AAAAVFSGQT…AEWLAMVEAA (80 aa).

This sequence belongs to the NAD-dependent DNA ligase family. LigA subfamily. Requires Mg(2+) as cofactor. Mn(2+) is required as a cofactor.

It catalyses the reaction NAD(+) + (deoxyribonucleotide)n-3'-hydroxyl + 5'-phospho-(deoxyribonucleotide)m = (deoxyribonucleotide)n+m + AMP + beta-nicotinamide D-nucleotide.. In terms of biological role, DNA ligase that catalyzes the formation of phosphodiester linkages between 5'-phosphoryl and 3'-hydroxyl groups in double-stranded DNA using NAD as a coenzyme and as the energy source for the reaction. It is essential for DNA replication and repair of damaged DNA. The chain is DNA ligase from Methylobacterium nodulans (strain LMG 21967 / CNCM I-2342 / ORS 2060).